Reading from the N-terminus, the 254-residue chain is 4-hydroxy-tetrahydrodipicolinate reductase (254 aa).

Residues 8 to 13 (GCSGKM), aspartate 35, 86 to 88 (CST), and 110 to 113 (SANM) each bind NAD(+). The active-site Proton donor/acceptor is the histidine 143. (S)-2,3,4,5-tetrahydrodipicolinate is bound at residue histidine 144. The Proton donor role is filled by lysine 147. 153-154 (GT) serves as a coordination point for (S)-2,3,4,5-tetrahydrodipicolinate.

This sequence belongs to the DapB family.

It localises to the cytoplasm. It catalyses the reaction (S)-2,3,4,5-tetrahydrodipicolinate + NAD(+) + H2O = (2S,4S)-4-hydroxy-2,3,4,5-tetrahydrodipicolinate + NADH + H(+). It carries out the reaction (S)-2,3,4,5-tetrahydrodipicolinate + NADP(+) + H2O = (2S,4S)-4-hydroxy-2,3,4,5-tetrahydrodipicolinate + NADPH + H(+). Its pathway is amino-acid biosynthesis; L-lysine biosynthesis via DAP pathway; (S)-tetrahydrodipicolinate from L-aspartate: step 4/4. Functionally, catalyzes the conversion of 4-hydroxy-tetrahydrodipicolinate (HTPA) to tetrahydrodipicolinate. This is 4-hydroxy-tetrahydrodipicolinate reductase from Clostridium perfringens (strain ATCC 13124 / DSM 756 / JCM 1290 / NCIMB 6125 / NCTC 8237 / Type A).